The sequence spans 453 residues: uncharacterized protein (453 aa).

The protein to B.subtilis YcdB.

This is an uncharacterized protein from Bacillus subtilis (strain 168).